A 65-amino-acid polypeptide reads, in one-letter code: Large ribosomal subunit protein bL33c (65 aa).

This sequence belongs to the bacterial ribosomal protein bL33 family.

The protein localises to the plastid. The protein resides in the chloroplast. The sequence is that of Large ribosomal subunit protein bL33c from Psilotum nudum (Whisk fern).